The following is a 665-amino-acid chain: Sodium-dependent phosphate transporter 1-B (665 aa).

6 consecutive transmembrane segments (helical) span residues Y26–A46, A67–S87, L107–F127, I163–Y183, A202–G222, and G235–V255. 2 disordered regions span residues V294–T345 and E423–R442. Residues E296–P306 show a composition bias toward low complexity. Positions A329–D338 are enriched in basic and acidic residues. The next 4 helical transmembrane spans lie at V499–G519, T548–G568, F588–V608, and I638–A658.

The protein belongs to the inorganic phosphate transporter (PiT) (TC 2.A.20) family.

The protein localises to the membrane. Its function is as follows. Sodium-phosphate symporter which plays a fundamental housekeeping role in phosphate transport. This Danio rerio (Zebrafish) protein is Sodium-dependent phosphate transporter 1-B (slc20a1b).